A 1033-amino-acid chain; its full sequence is uncharacterized protein (1033 aa).

4 coiled-coil regions span residues E212–N326, I405–F582, L615–N771, and K797–N1019.

This is an uncharacterized protein from Plasmodium falciparum (isolate 3D7).